The primary structure comprises 100 residues: Small ribosomal subunit protein uS14c (100 aa).

This sequence belongs to the universal ribosomal protein uS14 family. As to quaternary structure, part of the 30S ribosomal subunit.

The protein resides in the plastid. Its subcellular location is the chloroplast. In terms of biological role, binds 16S rRNA, required for the assembly of 30S particles. The polypeptide is Small ribosomal subunit protein uS14c (Amborella trichopoda).